A 38-amino-acid polypeptide reads, in one-letter code: Large ribosomal subunit protein bL36 (38 aa).

This sequence belongs to the bacterial ribosomal protein bL36 family.

The protein is Large ribosomal subunit protein bL36 of Prosthecochloris aestuarii (strain DSM 271 / SK 413).